We begin with the raw amino-acid sequence, 568 residues long: 2-succinyl-5-enolpyruvyl-6-hydroxy-3-cyclohexene-1-carboxylate synthase (568 aa).

This sequence belongs to the TPP enzyme family. MenD subfamily. In terms of assembly, homodimer. Requires Mg(2+) as cofactor. Mn(2+) is required as a cofactor. Thiamine diphosphate serves as cofactor.

It catalyses the reaction isochorismate + 2-oxoglutarate + H(+) = 5-enolpyruvoyl-6-hydroxy-2-succinyl-cyclohex-3-ene-1-carboxylate + CO2. It functions in the pathway quinol/quinone metabolism; 1,4-dihydroxy-2-naphthoate biosynthesis; 1,4-dihydroxy-2-naphthoate from chorismate: step 2/7. It participates in quinol/quinone metabolism; menaquinone biosynthesis. In terms of biological role, catalyzes the thiamine diphosphate-dependent decarboxylation of 2-oxoglutarate and the subsequent addition of the resulting succinic semialdehyde-thiamine pyrophosphate anion to isochorismate to yield 2-succinyl-5-enolpyruvyl-6-hydroxy-3-cyclohexene-1-carboxylate (SEPHCHC). This chain is 2-succinyl-5-enolpyruvyl-6-hydroxy-3-cyclohexene-1-carboxylate synthase, found in Actinobacillus pleuropneumoniae serotype 5b (strain L20).